A 236-amino-acid chain; its full sequence is uncharacterized protein (236 aa).

To M.tuberculosis Rv2557.

This is an uncharacterized protein from Mycobacterium tuberculosis (strain CDC 1551 / Oshkosh).